The primary structure comprises 172 residues: 3-hydroxydecanoyl-[acyl-carrier-protein] dehydratase (172 aa).

The active site involves His71.

Belongs to the thioester dehydratase family. FabA subfamily. In terms of assembly, homodimer.

It is found in the cytoplasm. It carries out the reaction a (3R)-hydroxyacyl-[ACP] = a (2E)-enoyl-[ACP] + H2O. The catalysed reaction is (3R)-hydroxydecanoyl-[ACP] = (2E)-decenoyl-[ACP] + H2O. The enzyme catalyses (2E)-decenoyl-[ACP] = (3Z)-decenoyl-[ACP]. It functions in the pathway lipid metabolism; fatty acid biosynthesis. Its function is as follows. Necessary for the introduction of cis unsaturation into fatty acids. Catalyzes the dehydration of (3R)-3-hydroxydecanoyl-ACP to E-(2)-decenoyl-ACP and then its isomerization to Z-(3)-decenoyl-ACP. Can catalyze the dehydratase reaction for beta-hydroxyacyl-ACPs with saturated chain lengths up to 16:0, being most active on intermediate chain length. The polypeptide is 3-hydroxydecanoyl-[acyl-carrier-protein] dehydratase (Escherichia coli (strain SE11)).